The following is a 296-amino-acid chain: MGAAAPAESADLGNFWKAGEPLLQGPDALAAPMSRSPSTPQTTPSPQGRQSPWPLRSLTQSHIQYFQWGRPVPSTHLIEVRPTQDPAKPQRVVSEGWRRPALPGETALGRDLSCAWEGCMKGGLCRAWNPGRTWSPVTIGIAPPERQESPWRSPGQRARPAGRPAAQELLDPCTRETLLGALSQCPKGSARFDGPLWFEVSDSKGGRRNLQPRPSAFKPLSKNGAVASFVPRPGPLKPSLGPWSLSFCDDAWPSVLVQPAPSAIWDFWEATTPSCGSCSRVSFALEVTQSAGPFGS.

Disordered stretches follow at residues 1–54 and 142–162; these read MGAA…SPWP and APPERQESPWRSPGQRARPAG. A compositionally biased stretch (low complexity) spans 34–52; the sequence is SRSPSTPQTTPSPQGRQSP.

Belongs to the POM121 family.

In Homo sapiens (Human), this protein is POM121-like protein 12 (POM121L12).